We begin with the raw amino-acid sequence, 347 residues long: Eukaryotic translation initiation factor 3 subunit I (347 aa).

5 WD repeats span residues 8 to 47 (GHER…RLGT), 50 to 89 (DHSG…AVHS), 150 to 190 (EQAT…VQAK), 192 to 233 (IHEK…KTYK), and 289 to 328 (GHFG…FDFK).

It belongs to the eIF-3 subunit I family. Component of the eukaryotic translation initiation factor 3 (eIF-3) complex.

It is found in the cytoplasm. Functionally, component of the eukaryotic translation initiation factor 3 (eIF-3) complex, which is involved in protein synthesis of a specialized repertoire of mRNAs and, together with other initiation factors, stimulates binding of mRNA and methionyl-tRNAi to the 40S ribosome. The eIF-3 complex specifically targets and initiates translation of a subset of mRNAs involved in cell proliferation. This chain is Eukaryotic translation initiation factor 3 subunit I, found in Kluyveromyces lactis (strain ATCC 8585 / CBS 2359 / DSM 70799 / NBRC 1267 / NRRL Y-1140 / WM37) (Yeast).